The sequence spans 202 residues: Neurensin-2 (202 aa).

The next 2 helical transmembrane spans lie at 65-85 and 116-136; these read VAVA…GYAV and VVGA…LFLI. Residues 162-202 form a disordered region; that stretch reads RDEPEKLSPAFHETSSQSPFLTPPSPFGQQSVQTSQPQRDL. The span at 188-202 shows a compositional bias: polar residues; that stretch reads FGQQSVQTSQPQRDL.

It belongs to the VMP family. Expressed specifically in brain where it is widely expressed, with highest levels of expression in thalamus and hypothalamus. In brain, found in neural cell bodies and detected in many regions of the limbic system, such as the septum nucleus, horizontal and vertical limbs of the diagonal band, hippocampus, amygdaloid nucleus, and habernula nucleus. Also localizes to small vesicles found in the perinuclear region of Neuro2a and PC12 cells.

The protein localises to the membrane. In terms of biological role, may play a role in maintenance and/or transport of vesicles. The polypeptide is Neurensin-2 (Mus musculus (Mouse)).